The following is a 478-amino-acid chain: Glycogen synthase (478 aa).

Lys-15 contacts ADP-alpha-D-glucose.

Belongs to the glycosyltransferase 1 family. Bacterial/plant glycogen synthase subfamily.

The catalysed reaction is [(1-&gt;4)-alpha-D-glucosyl](n) + ADP-alpha-D-glucose = [(1-&gt;4)-alpha-D-glucosyl](n+1) + ADP + H(+). It functions in the pathway glycan biosynthesis; glycogen biosynthesis. Synthesizes alpha-1,4-glucan chains using ADP-glucose. The sequence is that of Glycogen synthase from Acholeplasma laidlawii (strain PG-8A).